Reading from the N-terminus, the 2207-residue chain is Kinetochore-associated protein 1 (2207 aa).

At Thr-13 the chain carries Phosphothreonine. The residue at position 15 (Ser-15) is a Phosphoserine. The segment at 1024 to 1045 (EAAQAEHKHRGPPGPTPARGTH) is disordered.

As to quaternary structure, interacts with ZW10. This interaction is required for stable association with the kinetochore. Component of the RZZ complex composed of KNTC1/ROD, ZW10 and ZWILCH.

The protein resides in the cytoplasm. Its subcellular location is the nucleus. The protein localises to the chromosome. It is found in the centromere. It localises to the kinetochore. The protein resides in the cytoskeleton. Its subcellular location is the spindle. Its function is as follows. Essential component of the mitotic checkpoint, which prevents cells from prematurely exiting mitosis. Required for the assembly of the dynein-dynactin and MAD1-MAD2 complexes onto kinetochores. Its function related to the spindle assembly machinery is proposed to depend on its association in the mitotic RZZ complex. This chain is Kinetochore-associated protein 1 (Kntc1), found in Mus musculus (Mouse).